The primary structure comprises 108 residues: Insulin-1 (108 aa).

A signal peptide spans Met1–Ala24. 3 disulfides stabilise this stretch: Cys31-Cys94, Cys43-Cys107, and Cys93-Cys98. Positions Glu57–Gln85 are cleaved as a propeptide — c peptide.

The protein belongs to the insulin family. Heterodimer of a B chain and an A chain linked by two disulfide bonds.

Its subcellular location is the secreted. Insulin decreases blood glucose concentration. It increases cell permeability to monosaccharides, amino acids and fatty acids. It accelerates glycolysis, the pentose phosphate cycle, and glycogen synthesis in liver. In Mus musculus (Mouse), this protein is Insulin-1 (Ins1).